The primary structure comprises 506 residues: Histidine ammonia-lyase (506 aa).

A cross-link (5-imidazolinone (Ala-Gly)) is located at residues 143–145 (ASG). Serine 144 carries the 2,3-didehydroalanine (Ser) modification.

It belongs to the PAL/histidase family. Post-translationally, contains an active site 4-methylidene-imidazol-5-one (MIO), which is formed autocatalytically by cyclization and dehydration of residues Ala-Ser-Gly.

The protein localises to the cytoplasm. It catalyses the reaction L-histidine = trans-urocanate + NH4(+). It functions in the pathway amino-acid degradation; L-histidine degradation into L-glutamate; N-formimidoyl-L-glutamate from L-histidine: step 1/3. The protein is Histidine ammonia-lyase of Salmonella typhi.